Reading from the N-terminus, the 281-residue chain is NADPH-dependent 7-cyano-7-deazaguanine reductase (281 aa).

88-90 lines the substrate pocket; it reads IES. NADPH is bound at residue 90-91; that stretch reads SK. The active-site Thioimide intermediate is the cysteine 189. Aspartate 196 acts as the Proton donor in catalysis. 228 to 229 contributes to the substrate binding site; that stretch reads HE. NADPH is bound at residue 257–258; it reads RG.

Belongs to the GTP cyclohydrolase I family. QueF type 2 subfamily. In terms of assembly, homodimer.

Its subcellular location is the cytoplasm. The enzyme catalyses 7-aminomethyl-7-carbaguanine + 2 NADP(+) = 7-cyano-7-deazaguanine + 2 NADPH + 3 H(+). It participates in tRNA modification; tRNA-queuosine biosynthesis. Its function is as follows. Catalyzes the NADPH-dependent reduction of 7-cyano-7-deazaguanine (preQ0) to 7-aminomethyl-7-deazaguanine (preQ1). This is NADPH-dependent 7-cyano-7-deazaguanine reductase from Proteus mirabilis (strain HI4320).